The chain runs to 338 residues: Ferrochelatase (338 aa).

Fe cation is bound by residues H202 and E283.

It belongs to the ferrochelatase family.

The protein localises to the cytoplasm. It carries out the reaction heme b + 2 H(+) = protoporphyrin IX + Fe(2+). It participates in porphyrin-containing compound metabolism; protoheme biosynthesis; protoheme from protoporphyrin-IX: step 1/1. Functionally, catalyzes the ferrous insertion into protoporphyrin IX. The sequence is that of Ferrochelatase from Acinetobacter baumannii (strain AB307-0294).